A 64-amino-acid polypeptide reads, in one-letter code: Large ribosomal subunit protein bL32 (64 aa).

Over residues 1-16 the composition is skewed to basic residues; that stretch reads MAVQKSRKTRSRRGMR. The disordered stretch occupies residues 1-64; sequence MAVQKSRKTR…TPKESYEDEE (64 aa).

This sequence belongs to the bacterial ribosomal protein bL32 family.

The polypeptide is Large ribosomal subunit protein bL32 (Coxiella burnetii (strain CbuK_Q154) (Coxiella burnetii (strain Q154))).